A 140-amino-acid polypeptide reads, in one-letter code: Putative peptidyl-tRNA hydrolase PTRHD1 (140 aa).

Belongs to the PTH2 family. PTRHD1 subfamily.

The catalysed reaction is an N-acyl-L-alpha-aminoacyl-tRNA + H2O = an N-acyl-L-amino acid + a tRNA + H(+). As a putative peptidyl-tRNA hydrolase, it might be involved in releasing tRNAs from the ribosome during protein synthesis. Some evidence, however, suggests that it lacks peptidyl-tRNA hydrolase activity. This is Putative peptidyl-tRNA hydrolase PTRHD1 (PTRHD1) from Homo sapiens (Human).